The primary structure comprises 246 residues: Putative KilA-N domain-containing protein L33 (246 aa).

In terms of domain architecture, KilA-N spans 20-129 (RYTKCQYCDI…AKVSLWIEEW (110 aa)).

The protein is Putative KilA-N domain-containing protein L33 of Acanthamoeba polyphaga mimivirus (APMV).